Here is a 239-residue protein sequence, read N- to C-terminus: Phosphoribosylaminoimidazole-succinocarboxamide synthase (239 aa).

It belongs to the SAICAR synthetase family.

The enzyme catalyses 5-amino-1-(5-phospho-D-ribosyl)imidazole-4-carboxylate + L-aspartate + ATP = (2S)-2-[5-amino-1-(5-phospho-beta-D-ribosyl)imidazole-4-carboxamido]succinate + ADP + phosphate + 2 H(+). Its pathway is purine metabolism; IMP biosynthesis via de novo pathway; 5-amino-1-(5-phospho-D-ribosyl)imidazole-4-carboxamide from 5-amino-1-(5-phospho-D-ribosyl)imidazole-4-carboxylate: step 1/2. This is Phosphoribosylaminoimidazole-succinocarboxamide synthase from Psychrobacter sp. (strain PRwf-1).